Here is a 479-residue protein sequence, read N- to C-terminus: Probable periplasmic serine endoprotease DegP-like (479 aa).

Residues Met1–Ala27 form the signal peptide. Residues Leu77–Thr99 are disordered. Catalysis depends on charge relay system residues His119, Asp149, and Ser222. Residues Gly220–Ser222 and Leu277–Ile281 each bind substrate. PDZ domains are found at residues Leu266–Gly357 and Thr363–Gly468.

This sequence belongs to the peptidase S1C family.

Its subcellular location is the periplasm. It catalyses the reaction Acts on substrates that are at least partially unfolded. The cleavage site P1 residue is normally between a pair of hydrophobic residues, such as Val-|-Val.. Might be efficient in the degradation of transiently denatured and unfolded proteins which accumulate in the periplasm following stress conditions. This is Probable periplasmic serine endoprotease DegP-like (mucD) from Pseudomonas savastanoi pv. phaseolicola (strain 1448A / Race 6) (Pseudomonas syringae pv. phaseolicola (strain 1448A / Race 6)).